A 116-amino-acid chain; its full sequence is Mercuric transport protein MerT (116 aa).

The next 2 helical transmembrane spans lie at 16–36 (LAAI…ALGF) and 46–66 (VLEP…FFAW). 2 residues coordinate Hg(2+): C24 and C25. Residues C76 and C82 each coordinate Hg(2+). Residues 94 to 114 (IFWVVAALVLVALGFPYVMPF) traverse the membrane as a helical segment.

The protein belongs to the MerT family.

The protein localises to the cell inner membrane. Functionally, involved in mercury resistance. Probably transfers a mercuric ion from the periplasmic Hg(2+)-binding protein MerP to the cytoplasmic mercuric reductase MerA. This chain is Mercuric transport protein MerT, found in Serratia marcescens.